The sequence spans 1071 residues: Exportin-1 (1071 aa).

The Importin N-terminal domain maps to 46 to 112 (AQEVLTHLKE…KKYVVGLIIK (67 aa)). HEAT repeat units follow at residues 217–240 (QNAP…PLGY), 241–277 (IFET…VSVS), 354–472 (MLLV…YVDT), 515–553 (RFLV…QYPR), 560–597 (KFLK…KCRR), and 602–639 (VQVG…AVGY). Residues 327 to 450 (CTFLKEHGQL…VREFMKDTDS (124 aa)) are necessary for interaction with Ran and nuclear export complex formation. A Phosphoserine modification is found at Ser-391. The interval 411 to 481 (TVLSKVRLLM…TEIIMTKKLQ (71 aa)) is necessary for interaction with RANBP3. N6-acetyllysine is present on Lys-446. At Thr-448 the chain carries Phosphothreonine. Residue Ser-450 is modified to Phosphoserine. A Phosphotyrosine modification is found at Tyr-454. At Lys-693 the chain carries N6-acetyllysine. HEAT repeat units lie at residues 775–813 (NFVP…KLGG), 885–916 (TMRN…SFYQ), 917–954 (TYFC…NLVE), and 1002–1039 (FSLN…EERE). Ser-1031 carries the post-translational modification Phosphoserine.

Belongs to the exportin family. In terms of assembly, found in a U snRNA export complex with PHAX/RNUXA, NCBP1/CBP80, NCBP2/CBP20, RAN, XPO1 and m7G-capped RNA. Component of a nuclear export receptor complex composed of KPNB1, RAN, SNUPN and XPO1. Found in a trimeric export complex with SNUPN, RAN and XPO1. Found in a nuclear export complex with RANBP3 and RAN. Found in a 60S ribosomal subunit export complex with NMD3, RAN, XPO1. Interacts with DDX3X, NMD3, NUP42, NUP88, NUP214, RANBP3 and TERT. Interacts with NEMF (via its N-terminus). Interacts with the monomeric form of BIRC5/survivin deacetylated at 'Lys-129'. Interacts with SERTAD2; the interaction translocates SERTAD2 out of the nucleus. Interacts with ATF2. Interacts with SLC35G1 and STIM1. Interacts with DCAF8. Interacts with DTNBP1 and the interaction translocates DTNBP1 out of the nucleus. Interacts with CPEB3. Interacts with HAX1. Interacts with BOK; translocates to the cytoplasm. Interacts with HSP90AB1. Interacts with LRPPRC; interacts with LRPPRC alone and also when LRPPRC is in complex with EIF4E and with EIF4E sensitivity element (4ESE)-containing mRNAs to form an EIF4E-dependent mRNA export complex.

The protein resides in the cytoplasm. Its subcellular location is the nucleus. It is found in the nucleoplasm. It localises to the cajal body. The protein localises to the nucleolus. Its function is as follows. Mediates the nuclear export of cellular proteins (cargos) bearing a leucine-rich nuclear export signal (NES) and of RNAs. In the nucleus, in association with RANBP3, binds cooperatively to the NES on its target protein and to the GTPase Ran in its active GTP-bound form. Docking of this complex to the nuclear pore complex (NPC) is mediated through binding to nucleoporins. Upon transit of a nuclear export complex into the cytoplasm, disassembling of the complex and hydrolysis of Ran-GTP to Ran-GDP (induced by RANBP1 and RANGAP1, respectively) cause release of the cargo from the export receptor. The directionality of nuclear export is thought to be conferred by an asymmetric distribution of the GTP- and GDP-bound forms of Ran between the cytoplasm and nucleus. Involved in U3 snoRNA transport from Cajal bodies to nucleoli. Binds to late precursor U3 snoRNA bearing a TMG cap. This Mus musculus (Mouse) protein is Exportin-1 (Xpo1).